The following is a 186-amino-acid chain: MAQSGSMISGVAGRYARSLFELAQETGAVSVVEGDLVRFEEMLEGSEDLKRLIKSPVFSADEQLKALGAVLDRARISGLVGNFLRLVARNRRLFAVPQMIRAFREIAAEARGETAAEVTSAHALSAEQERELKAALKSVVGKDVTVKVTVDPSLLAGLIVKVGSRQIDTSLKTKLNSLKLALKEVG.

This sequence belongs to the ATPase delta chain family. F-type ATPases have 2 components, F(1) - the catalytic core - and F(0) - the membrane proton channel. F(1) has five subunits: alpha(3), beta(3), gamma(1), delta(1), epsilon(1). F(0) has three main subunits: a(1), b(2) and c(10-14). The alpha and beta chains form an alternating ring which encloses part of the gamma chain. F(1) is attached to F(0) by a central stalk formed by the gamma and epsilon chains, while a peripheral stalk is formed by the delta and b chains.

It is found in the cell inner membrane. In terms of biological role, f(1)F(0) ATP synthase produces ATP from ADP in the presence of a proton or sodium gradient. F-type ATPases consist of two structural domains, F(1) containing the extramembraneous catalytic core and F(0) containing the membrane proton channel, linked together by a central stalk and a peripheral stalk. During catalysis, ATP synthesis in the catalytic domain of F(1) is coupled via a rotary mechanism of the central stalk subunits to proton translocation. This protein is part of the stalk that links CF(0) to CF(1). It either transmits conformational changes from CF(0) to CF(1) or is implicated in proton conduction. This Chelativorans sp. (strain BNC1) protein is ATP synthase subunit delta.